The chain runs to 591 residues: L-fucose isomerase (591 aa).

Active-site proton acceptor residues include Glu337 and Asp361. 3 residues coordinate Mn(2+): Glu337, Asp361, and His528.

The protein belongs to the L-fucose isomerase family. As to quaternary structure, homohexamer. Mn(2+) is required as a cofactor.

It localises to the cytoplasm. It carries out the reaction L-fucose = L-fuculose. It functions in the pathway carbohydrate degradation; L-fucose degradation; L-lactaldehyde and glycerone phosphate from L-fucose: step 1/3. Its function is as follows. Converts the aldose L-fucose into the corresponding ketose L-fuculose. The chain is L-fucose isomerase from Escherichia coli O6:K15:H31 (strain 536 / UPEC).